A 300-amino-acid chain; its full sequence is tRNA dimethylallyltransferase (300 aa).

Position 9–16 (9–16 (GPTASGKS)) interacts with ATP. 11-16 (TASGKS) lines the substrate pocket. An interaction with substrate tRNA region spans residues 34–37 (DSKQ).

It belongs to the IPP transferase family. As to quaternary structure, monomer. Mg(2+) is required as a cofactor.

The enzyme catalyses adenosine(37) in tRNA + dimethylallyl diphosphate = N(6)-dimethylallyladenosine(37) in tRNA + diphosphate. Its function is as follows. Catalyzes the transfer of a dimethylallyl group onto the adenine at position 37 in tRNAs that read codons beginning with uridine, leading to the formation of N6-(dimethylallyl)adenosine (i(6)A). The sequence is that of tRNA dimethylallyltransferase from Ehrlichia ruminantium (strain Welgevonden).